Here is a 119-residue protein sequence, read N- to C-terminus: Large ribosomal subunit protein bL20 (119 aa).

The protein belongs to the bacterial ribosomal protein bL20 family.

In terms of biological role, binds directly to 23S ribosomal RNA and is necessary for the in vitro assembly process of the 50S ribosomal subunit. It is not involved in the protein synthesizing functions of that subunit. The chain is Large ribosomal subunit protein bL20 from Bradyrhizobium sp. (strain ORS 278).